A 114-amino-acid polypeptide reads, in one-letter code: Ribonuclease P protein component (114 aa).

The protein belongs to the RnpA family. As to quaternary structure, consists of a catalytic RNA component (M1 or rnpB) and a protein subunit.

It catalyses the reaction Endonucleolytic cleavage of RNA, removing 5'-extranucleotides from tRNA precursor.. Functionally, RNaseP catalyzes the removal of the 5'-leader sequence from pre-tRNA to produce the mature 5'-terminus. It can also cleave other RNA substrates such as 4.5S RNA. The protein component plays an auxiliary but essential role in vivo by binding to the 5'-leader sequence and broadening the substrate specificity of the ribozyme. The protein is Ribonuclease P protein component of Buchnera aphidicola subsp. Baizongia pistaciae (strain Bp).